A 360-amino-acid polypeptide reads, in one-letter code: Glyceraldehyde-3-phosphate dehydrogenase (360 aa).

NAD(+) is bound by residues 13–14 (RI), aspartate 35, and arginine 82. D-glyceraldehyde 3-phosphate contacts are provided by residues 153 to 155 (SCT), threonine 184, 213 to 214 (TG), and arginine 236. Cysteine 154 functions as the Nucleophile in the catalytic mechanism. Residue asparagine 318 coordinates NAD(+).

This sequence belongs to the glyceraldehyde-3-phosphate dehydrogenase family. In terms of assembly, homotetramer.

The catalysed reaction is D-glyceraldehyde 3-phosphate + phosphate + NAD(+) = (2R)-3-phospho-glyceroyl phosphate + NADH + H(+). It functions in the pathway carbohydrate degradation; glycolysis; pyruvate from D-glyceraldehyde 3-phosphate: step 1/5. In terms of biological role, key enzyme in glycolysis that catalyzes the first step of the pathway by converting D-glyceraldehyde 3-phosphate (G3P) into 3-phospho-D-glyceroyl phosphate. Essential for the maintenance of cellular ATP levels and carbohydrate metabolism. This chain is Glyceraldehyde-3-phosphate dehydrogenase, found in Atriplex nummularia (Old man saltbush).